An 85-amino-acid chain; its full sequence is uncharacterized protein (85 aa).

3 helical membrane-spanning segments follow: residues 4 to 24, 27 to 47, and 61 to 81; these read LTLC…LGGA, SPWL…LIGE, and RLLL…LYLA.

The protein localises to the cell membrane. This is an uncharacterized protein from Pseudomonas aeruginosa (strain ATCC 15692 / DSM 22644 / CIP 104116 / JCM 14847 / LMG 12228 / 1C / PRS 101 / PAO1).